The sequence spans 418 residues: MDKFKIDGRCTLNGEVTISGAKNAALPILFATLLCDEEIHLSNVPRLKDVGTTLKLLEMLGATTKVNGNVTVLTGAVNNHVAPYELVKTMRASILALGPLAARFGAADVSLPGGCAIGARPVNLHVHGLELMGAKIAIEDGYIKARVDGRLKGAHILMDMVSVTGTENLMMAATLADGRTVIENAAREPEVVDLANFLNALGAKVQGAGTDTLTIDGVERLHGGSYSVQPDRIETGTFLVGAAVTGGKVTCRKTDPSLLEAVLVKLEEAGALIEKGADWITLDMTGRTLKPVTIKTAPYPAFPTDMQAQFTVLNAVAKGTGMVTETIFENRFMHVPELVRMGADIELQGNVAICRDTEQLKGAQVMATDLRASASLVLAGFVAEGSTIVDRIYHIDRGYEDIEHKLQGLGGCIERIKG.

Position 22–23 (22–23 (KN)) interacts with phosphoenolpyruvate. UDP-N-acetyl-alpha-D-glucosamine is bound at residue R91. C115 (proton donor) is an active-site residue. Position 115 is a 2-(S-cysteinyl)pyruvic acid O-phosphothioketal (C115). UDP-N-acetyl-alpha-D-glucosamine contacts are provided by D305 and I327.

This sequence belongs to the EPSP synthase family. MurA subfamily.

The protein localises to the cytoplasm. It catalyses the reaction phosphoenolpyruvate + UDP-N-acetyl-alpha-D-glucosamine = UDP-N-acetyl-3-O-(1-carboxyvinyl)-alpha-D-glucosamine + phosphate. It participates in cell wall biogenesis; peptidoglycan biosynthesis. Its function is as follows. Cell wall formation. Adds enolpyruvyl to UDP-N-acetylglucosamine. The chain is UDP-N-acetylglucosamine 1-carboxyvinyltransferase from Aeromonas salmonicida (strain A449).